We begin with the raw amino-acid sequence, 168 residues long: Disulfide bond formation protein B (168 aa).

Topologically, residues 1 to 11 (MSNPMRPVRSI) are cytoplasmic. A helical transmembrane segment spans residues 12–28 (LLAIFTGCAGLIGYALY). Over 29-46 (LQLVENLLPCPLCVVQRM) the chain is Periplasmic. A disulfide bond links Cys38 and Cys41. Residues 47 to 63 (AYWLIGLTALAGFFHTP) traverse the membrane as a helical segment. The Cytoplasmic portion of the chain corresponds to 64–69 (ETTGRR). The chain crosses the membrane as a helical span at residues 70–87 (IYAGLMAVFAFTGGLVAL). The Periplasmic segment spans residues 88–143 (RQAWLVRYPEAFECGISPEEAFLNALPLARWWPVMFEANGDCADVTWKFASLTLPD). Cysteines 101 and 129 form a disulfide. Residues 144–162 (WSAIFFMILAALSIYVLLV) form a helical membrane-spanning segment. The Cytoplasmic portion of the chain corresponds to 163–168 (RENQRE).

It belongs to the DsbB family.

It localises to the cell inner membrane. In terms of biological role, required for disulfide bond formation in some periplasmic proteins. Acts by oxidizing the DsbA protein. The chain is Disulfide bond formation protein B from Nitrosospira multiformis (strain ATCC 25196 / NCIMB 11849 / C 71).